A 287-amino-acid polypeptide reads, in one-letter code: IQ domain-containing protein K (287 aa).

This Homo sapiens (Human) protein is IQ domain-containing protein K (IQCK).